Consider the following 331-residue polypeptide: Phenylalanine--tRNA ligase alpha subunit (331 aa).

E254 is a binding site for Mg(2+).

The protein belongs to the class-II aminoacyl-tRNA synthetase family. Phe-tRNA synthetase alpha subunit type 1 subfamily. Tetramer of two alpha and two beta subunits. It depends on Mg(2+) as a cofactor.

It localises to the cytoplasm. The enzyme catalyses tRNA(Phe) + L-phenylalanine + ATP = L-phenylalanyl-tRNA(Phe) + AMP + diphosphate + H(+). In Blochmanniella pennsylvanica (strain BPEN), this protein is Phenylalanine--tRNA ligase alpha subunit.